A 468-amino-acid polypeptide reads, in one-letter code: Phosphoglucosamine mutase (468 aa).

Ser-112 acts as the Phosphoserine intermediate in catalysis. 4 residues coordinate Mg(2+): Ser-112, Asp-254, Asp-256, and Asp-258. Ser-112 bears the Phosphoserine mark.

Belongs to the phosphohexose mutase family. The cofactor is Mg(2+). In terms of processing, activated by phosphorylation.

The catalysed reaction is alpha-D-glucosamine 1-phosphate = D-glucosamine 6-phosphate. In terms of biological role, catalyzes the conversion of glucosamine-6-phosphate to glucosamine-1-phosphate. The protein is Phosphoglucosamine mutase of Prochlorococcus marinus (strain MIT 9303).